Here is a 527-residue protein sequence, read N- to C-terminus: Peptidoglycan O-acetyltransferase (527 aa).

11 helical membrane-spanning segments follow: residues 11–31 (VFVL…VGFL), 55–75 (LFFY…SIVF), 96–116 (LILG…TDFF), 131–151 (LHLI…AYLM), 187–207 (HFLD…GPIV), 228–248 (NIAL…VIAD), 280–300 (LYFD…FFNI), 352–372 (LILV…FIIW), 397–417 (MPKI…WVFF), 463–483 (IMYA…SFCL), and 505–525 (LLLS…FLYF). Residue histidine 363 is part of the active site.

The protein belongs to the membrane-bound acyltransferase family.

The protein localises to the cell membrane. Catalyzes the O-acetylation of peptidoglycan (PG), an important mechanism that appears to confer lysozyme resistance and contributes to pathogen persistence in the host. In Helicobacter pylori (strain ATCC 700392 / 26695) (Campylobacter pylori), this protein is Peptidoglycan O-acetyltransferase (patA).